A 423-amino-acid chain; its full sequence is vacuole-related protein 17 (423 aa).

An N-acetylalanine modification is found at A2. A disordered region spans residues 109 to 134 (ATVPNEAPNDSPQSQSTRSSLGSFQP). Positions 110–170 (TVPNEAPNDS…NPINEVDCPS (61 aa)) are MYO2-binding. A compositionally biased stretch (polar residues) spans 116 to 131 (PNDSPQSQSTRSSLGS). S119 carries the post-translational modification Phosphoserine. A Phosphothreonine modification is found at T149. The tract at residues 150–211 (PSKPPKKSVG…SKKPSSSDTY (62 aa)) is disordered. Position 178 is a phosphoserine (S178). Residues 182–192 (QPARNRTLRAA) show a composition bias toward basic residues. Polar residues predominate over residues 199 to 211 (LNKSKKPSSSDTY). T248 is modified (phosphothreonine). Position 269 is a phosphoserine (S269). Positions 290–380 (SASFFRPSNP…ISESFQSKRG (91 aa)) are VAC8-binding.

The protein belongs to the VAC17 family. In terms of assembly, interacts with MYO2 and VAC8. Interacts with ATG18.

The protein localises to the vacuole membrane. Vacuole-specific MYO2 receptor required for vacuole inheritance. Binds simultaneously to MYO2 and to VAC8, a vacuolar membrane protein, forming a transport complex which moves the attached vacuole membrane along actin cables into the bud. Once the vacuole arrives in the bud, VAC17 is degraded, depositing the vacuole in its correct location. This Saccharomyces cerevisiae (strain ATCC 204508 / S288c) (Baker's yeast) protein is vacuole-related protein 17 (VAC17).